Reading from the N-terminus, the 124-residue chain is Small ribosomal subunit protein bS16 (124 aa).

A compositionally biased stretch (basic and acidic residues) spans Glu84–Arg110. The tract at residues Glu84–Glu124 is disordered. Over residues Glu111–Glu124 the composition is skewed to low complexity.

This sequence belongs to the bacterial ribosomal protein bS16 family.

In Paracoccus denitrificans (strain Pd 1222), this protein is Small ribosomal subunit protein bS16.